Here is a 307-residue protein sequence, read N- to C-terminus: tRNA dimethylallyltransferase (307 aa).

G9–T16 is an ATP binding site. T11 to T16 contributes to the substrate binding site. Residues D34–Q37 form an interaction with substrate tRNA region.

This sequence belongs to the IPP transferase family. As to quaternary structure, monomer. It depends on Mg(2+) as a cofactor.

It catalyses the reaction adenosine(37) in tRNA + dimethylallyl diphosphate = N(6)-dimethylallyladenosine(37) in tRNA + diphosphate. In terms of biological role, catalyzes the transfer of a dimethylallyl group onto the adenine at position 37 in tRNAs that read codons beginning with uridine, leading to the formation of N6-(dimethylallyl)adenosine (i(6)A). This Limosilactobacillus fermentum (strain NBRC 3956 / LMG 18251) (Lactobacillus fermentum) protein is tRNA dimethylallyltransferase.